A 149-amino-acid polypeptide reads, in one-letter code: 3-dehydroquinate dehydratase (149 aa).

The active-site Proton acceptor is Tyr26. Residues Asn78, His84, and Asp91 each coordinate substrate. His104 serves as the catalytic Proton donor. Residues 105–106 (LS) and Arg115 each bind substrate.

The protein belongs to the type-II 3-dehydroquinase family. Homododecamer.

The enzyme catalyses 3-dehydroquinate = 3-dehydroshikimate + H2O. Its pathway is metabolic intermediate biosynthesis; chorismate biosynthesis; chorismate from D-erythrose 4-phosphate and phosphoenolpyruvate: step 3/7. Its function is as follows. Catalyzes a trans-dehydration via an enolate intermediate. The sequence is that of 3-dehydroquinate dehydratase from Polynucleobacter asymbioticus (strain DSM 18221 / CIP 109841 / QLW-P1DMWA-1) (Polynucleobacter necessarius subsp. asymbioticus).